A 116-amino-acid polypeptide reads, in one-letter code: Nucleoid-associated protein P9215_00191 (116 aa).

It belongs to the YbaB/EbfC family. Homodimer.

It localises to the cytoplasm. The protein localises to the nucleoid. Its function is as follows. Binds to DNA and alters its conformation. May be involved in regulation of gene expression, nucleoid organization and DNA protection. The polypeptide is Nucleoid-associated protein P9215_00191 (Prochlorococcus marinus (strain MIT 9215)).